The following is a 167-amino-acid chain: 6,7-dimethyl-8-ribityllumazine synthase (167 aa).

5-amino-6-(D-ribitylamino)uracil is bound by residues Phe-23, 57-59 (TYE), and 81-83 (AVI). 86 to 87 (GT) is a (2S)-2-hydroxy-3-oxobutyl phosphate binding site. His-89 acts as the Proton donor in catalysis. Phe-119 contacts 5-amino-6-(D-ribitylamino)uracil. Arg-133 provides a ligand contact to (2S)-2-hydroxy-3-oxobutyl phosphate.

It belongs to the DMRL synthase family.

The enzyme catalyses (2S)-2-hydroxy-3-oxobutyl phosphate + 5-amino-6-(D-ribitylamino)uracil = 6,7-dimethyl-8-(1-D-ribityl)lumazine + phosphate + 2 H2O + H(+). Its pathway is cofactor biosynthesis; riboflavin biosynthesis; riboflavin from 2-hydroxy-3-oxobutyl phosphate and 5-amino-6-(D-ribitylamino)uracil: step 1/2. Catalyzes the formation of 6,7-dimethyl-8-ribityllumazine by condensation of 5-amino-6-(D-ribitylamino)uracil with 3,4-dihydroxy-2-butanone 4-phosphate. This is the penultimate step in the biosynthesis of riboflavin. The sequence is that of 6,7-dimethyl-8-ribityllumazine synthase from Myxococcus xanthus (strain DK1622).